We begin with the raw amino-acid sequence, 159 residues long: Protein Smg homolog (159 aa).

This sequence belongs to the Smg family.

The chain is Protein Smg homolog from Vibrio campbellii (strain ATCC BAA-1116).